We begin with the raw amino-acid sequence, 80 residues long: Beta-toxin KAaH1 (80 aa).

Residues 1-22 (MMKLMLFSIIVILFSLIGSIHG) form the signal peptide. In terms of domain architecture, LCN-type CS-alpha/beta spans 25 to 80 (VPGNYPLDSSDDTYLCAPLGENPFCIKICRKHGVKYGYCYAFQCWCEYLEDKNVKI). 3 disulfides stabilise this stretch: Cys-40/Cys-63, Cys-49/Cys-68, and Cys-53/Cys-70.

It belongs to the long (3 C-C) scorpion toxin superfamily. Sodium/Potassium channel inhibitor family. As to expression, expressed by the venom gland.

Its subcellular location is the secreted. Functionally, inhibits the vertebrate potassium channels Kv1.1/KCNA1 and Kv1.3/KCNA3 in vitro with an IC(50) of 5.3 nM and 50.0 nM respectively. The protein is Beta-toxin KAaH1 of Androctonus australis (Sahara scorpion).